We begin with the raw amino-acid sequence, 170 residues long: Urease accessory protein UreE (170 aa).

Residues Glu-134 to Glu-170 are disordered.

It belongs to the UreE family.

The protein resides in the cytoplasm. Involved in urease metallocenter assembly. Binds nickel. Probably functions as a nickel donor during metallocenter assembly. The polypeptide is Urease accessory protein UreE (Janthinobacterium sp. (strain Marseille) (Minibacterium massiliensis)).